A 433-amino-acid chain; its full sequence is GTPase Obg (433 aa).

The 159-residue stretch at 1–159 (MAFRDVLDIE…RRVRLELRLI (159 aa)) folds into the Obg domain. The region spanning 160–327 (ADVGLVGYPN…LRQALFDLLP (168 aa)) is the OBG-type G domain. ATP contacts are provided by residues 166–173 (GYPNAGKS), 191–195 (FTTLS), 214–217 (DIPG), 280–283 (NKIE), and 308–310 (SAK). Mg(2+) is bound by residues serine 173 and threonine 193. Residues 342–430 (PEEVREEPLT…IGSFRFEYYA (89 aa)) form the OCT domain.

Belongs to the TRAFAC class OBG-HflX-like GTPase superfamily. OBG GTPase family. In terms of assembly, monomer. It depends on Mg(2+) as a cofactor.

It is found in the cytoplasm. Its function is as follows. An essential GTPase which binds GTP, GDP and possibly (p)ppGpp with moderate affinity, with high nucleotide exchange rates and a fairly low GTP hydrolysis rate. Plays a role in control of the cell cycle, stress response, ribosome biogenesis and in those bacteria that undergo differentiation, in morphogenesis control. The chain is GTPase Obg from Deinococcus geothermalis (strain DSM 11300 / CIP 105573 / AG-3a).